The chain runs to 295 residues: Bifunctional protein FolD (295 aa).

NADP(+) contacts are provided by residues 166-168 (GRS), Ser-195, and Ile-236.

Belongs to the tetrahydrofolate dehydrogenase/cyclohydrolase family. As to quaternary structure, homodimer.

It carries out the reaction (6R)-5,10-methylene-5,6,7,8-tetrahydrofolate + NADP(+) = (6R)-5,10-methenyltetrahydrofolate + NADPH. It catalyses the reaction (6R)-5,10-methenyltetrahydrofolate + H2O = (6R)-10-formyltetrahydrofolate + H(+). It functions in the pathway one-carbon metabolism; tetrahydrofolate interconversion. In terms of biological role, catalyzes the oxidation of 5,10-methylenetetrahydrofolate to 5,10-methenyltetrahydrofolate and then the hydrolysis of 5,10-methenyltetrahydrofolate to 10-formyltetrahydrofolate. This is Bifunctional protein FolD from Prosthecochloris aestuarii (strain DSM 271 / SK 413).